The chain runs to 494 residues: Anthranilate synthase component 1 (494 aa).

Residues Ser-50 and 276–278 each bind L-tryptophan; that span reads PYM. Position 311-312 (311-312) interacts with chorismate; sequence GT. Mg(2+) is bound at residue Glu-338. Residues Tyr-426, Arg-446, 460-462, and Gly-462 contribute to the chorismate site; that span reads GAG. Glu-475 contributes to the Mg(2+) binding site.

Belongs to the anthranilate synthase component I family. As to quaternary structure, heterotetramer consisting of two non-identical subunits: a beta subunit (TrpG) and a large alpha subunit (TrpE). Requires Mg(2+) as cofactor.

It carries out the reaction chorismate + L-glutamine = anthranilate + pyruvate + L-glutamate + H(+). Its pathway is amino-acid biosynthesis; L-tryptophan biosynthesis; L-tryptophan from chorismate: step 1/5. Feedback inhibited by tryptophan. In terms of biological role, part of a heterotetrameric complex that catalyzes the two-step biosynthesis of anthranilate, an intermediate in the biosynthesis of L-tryptophan. In the first step, the glutamine-binding beta subunit (TrpG) of anthranilate synthase (AS) provides the glutamine amidotransferase activity which generates ammonia as a substrate that, along with chorismate, is used in the second step, catalyzed by the large alpha subunit of AS (TrpE) to produce anthranilate. In the absence of TrpG, TrpE can synthesize anthranilate directly from chorismate and high concentrations of ammonia. The polypeptide is Anthranilate synthase component 1 (trpE) (Acetivibrio thermocellus (Hungateiclostridium thermocellum)).